A 213-amino-acid chain; its full sequence is Large ribosomal subunit protein uL23 (213 aa).

The interval 1 to 117 is large ribosomal subunit protein uL23; sequence MNHNEIIKYP…KSTSELKLEE (117 aa). Residues 118–213 are unknown; it reads KIAAKIAAKE…TTKKTTTKKV (96 aa).

Belongs to the universal ribosomal protein uL23 family. As to quaternary structure, part of the 50S ribosomal subunit. Contacts protein L29, and trigger factor when it is bound to the ribosome.

In terms of biological role, one of the early assembly proteins it binds 23S rRNA. One of the proteins that surrounds the polypeptide exit tunnel on the outside of the ribosome. Forms the main docking site for trigger factor binding to the ribosome. This Mycoplasma mobile (strain ATCC 43663 / 163K / NCTC 11711) (Mesomycoplasma mobile) protein is Large ribosomal subunit protein uL23.